The following is a 255-amino-acid chain: MKIGVFDSGVGGFSVLKSLLKAQLFDEIIYYGDSARVPYGTKDSATIKQFSLEALDFFKPHEIELLIVACNTASALALETMQKHSKIPIVGVIEPSILAIKQHVKDKNTPILVLGTKATIRSSAYDNALKQQGYLNVSHLATSLFVPLIEENVLEGELLETCMRYYFAPLKIFPEVIILGCTHFPLIAQKIESYFVEHFALSTPPLLIHSGDAIVEYLQQKYALKKNVYAFPKIEFHASGDVIWLEQQAKEWLKL.

Residues 7–8 (DS) and 39–40 (YG) contribute to the substrate site. The active-site Proton donor/acceptor is Cys-70. 71–72 (NT) is a binding site for substrate. Cys-181 serves as the catalytic Proton donor/acceptor. Substrate is bound at residue 182–183 (TH).

It belongs to the aspartate/glutamate racemases family.

It carries out the reaction L-glutamate = D-glutamate. The protein operates within cell wall biogenesis; peptidoglycan biosynthesis. In terms of biological role, provides the (R)-glutamate required for cell wall biosynthesis. In Helicobacter acinonychis (strain Sheeba), this protein is Glutamate racemase.